The primary structure comprises 270 residues: NADPH-dependent 7-cyano-7-deazaguanine reductase (270 aa).

79–81 (IES) is a binding site for substrate. 81–82 (SK) provides a ligand contact to NADPH. Cysteine 177 serves as the catalytic Thioimide intermediate. Aspartate 184 (proton donor) is an active-site residue. Residue 216–217 (HE) participates in substrate binding. 245 to 246 (RG) lines the NADPH pocket.

The protein belongs to the GTP cyclohydrolase I family. QueF type 2 subfamily. In terms of assembly, homodimer.

Its subcellular location is the cytoplasm. The catalysed reaction is 7-aminomethyl-7-carbaguanine + 2 NADP(+) = 7-cyano-7-deazaguanine + 2 NADPH + 3 H(+). The protein operates within tRNA modification; tRNA-queuosine biosynthesis. Functionally, catalyzes the NADPH-dependent reduction of 7-cyano-7-deazaguanine (preQ0) to 7-aminomethyl-7-deazaguanine (preQ1). The protein is NADPH-dependent 7-cyano-7-deazaguanine reductase of Acinetobacter baumannii (strain ACICU).